A 211-amino-acid polypeptide reads, in one-letter code: FMN-dependent NADH:quinone oxidoreductase 3 (211 aa).

102 to 105 (MWNF) contacts FMN.

Belongs to the azoreductase type 1 family. Homodimer. Requires FMN as cofactor.

The catalysed reaction is 2 a quinone + NADH + H(+) = 2 a 1,4-benzosemiquinone + NAD(+). The enzyme catalyses N,N-dimethyl-1,4-phenylenediamine + anthranilate + 2 NAD(+) = 2-(4-dimethylaminophenyl)diazenylbenzoate + 2 NADH + 2 H(+). Quinone reductase that provides resistance to thiol-specific stress caused by electrophilic quinones. Functionally, also exhibits azoreductase activity. Catalyzes the reductive cleavage of the azo bond in aromatic azo compounds to the corresponding amines. This Bacillus anthracis protein is FMN-dependent NADH:quinone oxidoreductase 3.